The primary structure comprises 464 residues: Argininosuccinate lyase (464 aa).

The protein belongs to the lyase 1 family. Argininosuccinate lyase subfamily.

Its subcellular location is the cytoplasm. The catalysed reaction is 2-(N(omega)-L-arginino)succinate = fumarate + L-arginine. It functions in the pathway amino-acid biosynthesis; L-arginine biosynthesis; L-arginine from L-ornithine and carbamoyl phosphate: step 3/3. The sequence is that of Argininosuccinate lyase from Pseudomonas entomophila (strain L48).